The following is a 456-amino-acid chain: NADH oxidase (456 aa).

Asn10 provides a ligand contact to FAD. His11 serves as the catalytic Proton acceptor. Residues Ala12, Asp34, Gln35, Cys44, Val81, Ala110, Ser113, Lys143, and Tyr170 each contribute to the FAD site. Residue Cys44 is the Redox-active of the active site. At Cys44 the chain carries Cysteine sulfinic acid (-SO2H). NAD(+) contacts are provided by Ile171, Asp190, Tyr199, and Gly254. Residue Asp292 coordinates FAD. Ala308 is a binding site for NAD(+). Residues Leu309, Ala310, and Ser311 each coordinate FAD. Residue Gly339 participates in NAD(+) binding. Phe436 is an FAD binding site.

Requires FAD as cofactor.

The catalysed reaction is 2 NADH + O2 + 2 H(+) = 2 NAD(+) + 2 H2O. Its function is as follows. Catalyzes the four-electron reduction of molecular oxygen to water. The chain is NADH oxidase from Streptococcus pyogenes serotype M6 (strain ATCC BAA-946 / MGAS10394).